We begin with the raw amino-acid sequence, 31 residues long: Cytochrome b6-f complex subunit 6 (31 aa).

Residues 4–24 (ITSYFGFLLAALTITSVLFIG) traverse the membrane as a helical segment.

It belongs to the PetL family. In terms of assembly, the 4 large subunits of the cytochrome b6-f complex are cytochrome b6, subunit IV (17 kDa polypeptide, PetD), cytochrome f and the Rieske protein, while the 4 small subunits are PetG, PetL, PetM and PetN. The complex functions as a dimer.

The protein resides in the plastid. The protein localises to the chloroplast thylakoid membrane. Functionally, component of the cytochrome b6-f complex, which mediates electron transfer between photosystem II (PSII) and photosystem I (PSI), cyclic electron flow around PSI, and state transitions. PetL is important for photoautotrophic growth as well as for electron transfer efficiency and stability of the cytochrome b6-f complex. This chain is Cytochrome b6-f complex subunit 6, found in Nandina domestica (Heavenly bamboo).